The chain runs to 460 residues: Muscarinic acetylcholine receptor M1 (460 aa).

The Extracellular segment spans residues 1 to 22; the sequence is MNTSVPPAVSPNITVLAPGKGP. N-linked (GlcNAc...) asparagine glycosylation is found at Asn2 and Asn12. The helical transmembrane segment at 23–48 threads the bilayer; it reads WQVAFIGITTGLLSLATVTGNLLVLI. Over 49–62 the chain is Cytoplasmic; it reads SFKVNTELKTVNNY. Residues 63 to 84 traverse the membrane as a helical segment; sequence FLLSLACADLIIGTFSMNLYTT. Residues 85-95 lie on the Extracellular side of the membrane; the sequence is YLLMGHWALGT. The helical transmembrane segment at 96 to 121 threads the bilayer; it reads LACDLWLALDYVASNASVMNLLLISF. Cys98 and Cys178 are disulfide-bonded. The Cytoplasmic segment spans residues 122–142; it reads DRYFSVTRPLSYRAKRTPRRA. A helical transmembrane segment spans residues 143 to 164; that stretch reads ALMIGLAWLVSFVLWAPAILFW. Residues 165 to 185 are Extracellular-facing; the sequence is QYLVGERTVLAGQCYIQFLSQ. Residues 186 to 209 traverse the membrane as a helical segment; the sequence is PIITFGTAMAAFYLPVTVMCTLYW. At 210-366 the chain is on the cytoplasmic side; that stretch reads RIYRETENRA…LVKEKKAART (157 aa). Disordered regions lie at residues 225 to 257, 274 to 297, and 310 to 351; these read LQGSETPGKGGGSSSSSERSQPGAEGSPESPPG, WKEEEEEDEGSMESLTSSEGEEPG, and EAQA…QLAK. Thr230 is modified (phosphothreonine). Over residues 238–257 the composition is skewed to low complexity; that stretch reads SSSSERSQPGAEGSPESPPG. Ser254 is modified (phosphoserine). Over residues 328–343 the composition is skewed to basic residues; the sequence is RPTKKGRDRGGKGQKP. Residues 367-390 form a helical membrane-spanning segment; that stretch reads LSAILLAFILTWTPYNIMVLVSTF. At 391-397 the chain is on the extracellular side; that stretch reads CKDCVPE. The chain crosses the membrane as a helical span at residues 398 to 420; that stretch reads TLWELGYWLCYVNSTVNPMCYAL. Residues 421–460 lie on the Cytoplasmic side of the membrane; the sequence is CNKAFRDTFRLLLLCRWDKRRWRKIPKRPGSVHRTPSRQC. Position 451 is a phosphoserine (Ser451). A Phosphothreonine modification is found at Thr455. Residue Ser457 is modified to Phosphoserine.

Belongs to the G-protein coupled receptor 1 family. Muscarinic acetylcholine receptor subfamily. CHRM1 sub-subfamily. In terms of assembly, interacts with GPRASP2. Interacts with TMEM147.

The protein localises to the cell membrane. It localises to the postsynaptic cell membrane. Its function is as follows. The muscarinic acetylcholine receptor mediates various cellular responses, including inhibition of adenylate cyclase, breakdown of phosphoinositides and modulation of potassium channels through the action of G proteins. Primary transducing effect is Pi turnover. This Mus musculus (Mouse) protein is Muscarinic acetylcholine receptor M1 (Chrm1).